The sequence spans 409 residues: Immunity-related GTPase family M protein 1 (409 aa).

The region spanning 75 to 251 (IPVSIFVTGD…PKLRDTLHKD (177 aa)) is the IRG-type G domain. GTP-binding positions include 84-91 (DSGNGMSS), 109-113 (TGVVR), and 191-193 (KLD). At Ser202 the chain carries Phosphoserine. A GTP-binding site is contributed by 232–234 (SSL). Lys270 participates in a covalent cross-link: Glycyl lysine isopeptide (Lys-Gly) (interchain with G-Cter in ubiquitin). The alpha-K amphipathic helix stretch occupies residues 350-374 (KLRLMTCAIVNAFFRLLRFLPCVCC).

The protein belongs to the TRAFAC class dynamin-like GTPase superfamily. IRG family. As to quaternary structure, interacts with ULK1; promoting the coassembly of ULK1 and BECN1. Interacts with BECN1; enhancing BECN1-interacting partners and influencing the composition of the BECN1 complex. Interacts with ATG16L1. Interacts with NOD2; promoting Irgm1 'Lys-63'-linked polyubiquitination, which is required for interactions with the core autophagy factors. Interacts with STX17; promoting STX17 recruitment to autophagosomes. Interacts with ATG8 proteins (GABARAP, GABARAPL1, GABARAPL2, MAP1LC3A, MAP1LC3B and MAP1LC3C); promoting STX17 recruitment to autophagosomes. Interacts with TFEB; promoting association between TFEB and PPP3CB and TFEB dephosphorylation. Interacts with PPP3CB; promoting association between TFEB and PPP3CB and TFEB dephosphorylation. Interacts with NLRP3; preventing NLRP3 inflammasome assembly and promoting SQSTM1/p62-dependent autophagic degradation of NLRP3. Interacts with CGAS; promoting SQSTM1/p62-dependent autophagic degradation of CGAS. Interacts with RIGI/RIG-I; promoting SQSTM1/p62-dependent autophagic degradation of RIGI/RIG-I. Interacts with NOD1; promoting SQSTM1/p62-dependent autophagic degradation of RIGI/RIG-I. Interacts with NOD2; promoting SQSTM1/p62-dependent autophagic degradation of RIGI/RIG-I. Interacts with RIPK2; promoting SQSTM1/p62-dependent autophagic degradation of RIGI/RIG-I. Interacts with PIK3CA. Post-translationally, palmitoylated on C-terminal Cys residues. Palmitoylation, together with the alpha-K amphipathic helix, which binds phosphatidylinositol, mediate binding to membranes. Ubiquitinated via 'Lys-63'-linked polyubiquitination in a NOD2-dependent process. 'Lys-63'-linked polyubiquitination is required for interactions with the core autophagy factors. Ubiquitination at Lys-270 by the DCX(WDR77) complex, also named CLR4(WDR77) complex, in intestinal cells, leading to its degradation by the proteasome. Expressed in lung and primary macrophages.

The protein localises to the golgi apparatus membrane. The protein resides in the cell membrane. Its subcellular location is the cytoplasmic vesicle. It is found in the phagosome membrane. It localises to the autophagosome membrane. The protein localises to the lysosome membrane. The protein resides in the late endosome membrane. Its subcellular location is the mitochondrion membrane. It is found in the lipid droplet. It localises to the cell projection. The protein localises to the phagocytic cup. It carries out the reaction GTP + H2O = GDP + phosphate + H(+). In terms of biological role, immunity-related GTPase that plays important roles in innate immunity and inflammatory response. Acts as a dynamin-like protein that binds to intracellular membranes and promotes remodeling and trafficking of those membranes. Required for clearance of acute protozoan and bacterial infections by interacting with autophagy and lysosome regulatory proteins, thereby promoting the fusion of phagosomes with lysosomes for efficient degradation of cargo including microbes. Regulates selective autophagy, including xenophagy and mitophagy, both directly and indirectly. Directly regulates autophagy by acting as a molecular adapter that promotes the coassembly of the core autophagy machinery to mediate antimicrobial defense: Irgm1 (1) activates AMPK, which in turn phosphorylates ULK1 and BECN1 to induce autophagy, (2) promotes the coassembly of ULK1 and BECN1, enhancing BECN1-interacting partners and (3) influences the composition of the BECN1 complex, by competing with the negative regulators BCL2 and RUBCN, to trigger autophagy. Also activates autophagy by promoting recruitment of STX17 to autophagosomes. In collaboration with ATG8 proteins, regulate lysosomal biogenesis, a fundamental process for any autophagic pathway, by promoting TFEB dephosphorylation. Also modulates autophagy by assisting with autophagosome formation and preventing lysosomal deacidification. Regulates autophagy by affecting mitochondrial fusion and fission. Also involved in M1 macrophage activation for the production of proinflammatory cytokines. While activating autophagy, acts as a key negative regulator of the inflammatory and interferon responses both by (1) promoting mitophagy and (2) mediating autophagy-dependent degradation of effectors of the inflammatory response. Promotes degradation of damaged and IFNG/IFN-gamma-stressed mitochondria via mitophagy, preventing cytosolic release of ligands that activate inflammation. Negatively regulates interferon-signaling in hematopoietic stem cells, preserving hematopoietic stem cell number and function. Promotes expansion of activated CD4(+) T-cells by inhibiting IFNG/IFN-gamma signaling, thereby preventing Ifng-mediated cell death of CD4(+) T-cells. Acts as a suppressor of inflammation by promoting recruitment of inflammation effectors, such as CGAS, RIGI/RIG-I and NLRP3, to autophagosome membranes, leading to their SQSTM1/p62-dependent autophagic degradation. Also directly inhibits assembly of the NLRP3 inflammasome by preventing the association between NLRP3 and PYCARD. Acts as a negative regulator of antiviral innate immune response by suppressing the RIPK2-dependent pro-inflammatory response: mediates recruitment of RIPosomes, composed of RIPK2 and NOD1 or NOD2, to autophagosome membranes, promoting their SQSTM1/p62-dependent autophagic degradation. This is Immunity-related GTPase family M protein 1 from Mus musculus (Mouse).